The following is a 388-amino-acid chain: MQIHPLITDSKTLAQFCARIAKSPYIAVDTEFMRENSYWPDLCLVQVADEHEAAAIDPKAPGLDLSPLLDLMVDNEDVLKVFHAGGQDLEIIYNLTGKTPHPLFDTQIAAMALGLGEQIGYGNLVDAWLGVQLDKGARFTDWARRPLDKRQIDYAIGDVTYLIQIFPKMLEELRRTGRGDWLDQEMERISDPSNYENKPEEAWQRVRIASRKADVLGRLKALAAWREMEAQDKNLPRGRIVKDETLADIASHPPRTQEDLGKVRGLSATWKTNDIGNRLMLALASHAPLAKEEMPERDPKRPGLGKDGALVADLLKLLLKIRSRDINVAARLIARSDDIDALAAGVREDLAILEGWRYEQFGRDAVDLVEGRLAFAVKNGRLKMTRTQ.

Residues isoleucine 7–leucine 173 enclose the 3'-5' exonuclease domain. The HRDC domain occupies lysine 212–glutamate 293.

This sequence belongs to the RNase D family. A divalent metal cation is required as a cofactor.

The protein localises to the cytoplasm. The enzyme catalyses Exonucleolytic cleavage that removes extra residues from the 3'-terminus of tRNA to produce 5'-mononucleotides.. Its function is as follows. Exonuclease involved in the 3' processing of various precursor tRNAs. Initiates hydrolysis at the 3'-terminus of an RNA molecule and releases 5'-mononucleotides. In Sphingobium indicum (strain DSM 16413 / CCM 7287 / MTCC 6362 / UT26 / NBRC 101211 / UT26S) (Sphingobium japonicum), this protein is Ribonuclease D.